The following is a 697-amino-acid chain: Polyribonucleotide nucleotidyltransferase (697 aa).

The Mg(2+) site is built by D487 and D493. In terms of domain architecture, KH spans 554–613 (PRIETIQIKPSKIAVVIGPGGKQIRAIIEQTGVQIDIDDTGLVNIAAIDLVSIEKAKAII). Residues 623–691 (GRIYSGKAIS…ERGQIKLSRK (69 aa)) form the S1 motif domain.

This sequence belongs to the polyribonucleotide nucleotidyltransferase family. Requires Mg(2+) as cofactor.

The protein localises to the cytoplasm. The catalysed reaction is RNA(n+1) + phosphate = RNA(n) + a ribonucleoside 5'-diphosphate. Functionally, involved in mRNA degradation. Catalyzes the phosphorolysis of single-stranded polyribonucleotides processively in the 3'- to 5'-direction. The chain is Polyribonucleotide nucleotidyltransferase from Protochlamydia amoebophila (strain UWE25).